A 426-amino-acid polypeptide reads, in one-letter code: Histidine--tRNA ligase (426 aa).

It belongs to the class-II aminoacyl-tRNA synthetase family.

The protein localises to the cytoplasm. The catalysed reaction is tRNA(His) + L-histidine + ATP = L-histidyl-tRNA(His) + AMP + diphosphate + H(+). The protein is Histidine--tRNA ligase of Saccharolobus solfataricus (strain ATCC 35092 / DSM 1617 / JCM 11322 / P2) (Sulfolobus solfataricus).